We begin with the raw amino-acid sequence, 132 residues long: Large ribosomal subunit protein bL19 (132 aa).

It belongs to the bacterial ribosomal protein bL19 family.

This protein is located at the 30S-50S ribosomal subunit interface and may play a role in the structure and function of the aminoacyl-tRNA binding site. This Rhodospirillum centenum (strain ATCC 51521 / SW) protein is Large ribosomal subunit protein bL19.